A 476-amino-acid polypeptide reads, in one-letter code: Protein transport protein Sec61 subunit alpha-like 1 (476 aa).

Residues 2–33 lie on the Cytoplasmic side of the membrane; the sequence is AIKFLEVIKPFCAVLPEIQKPERKIQFREKVL. The helical transmembrane segment at 34-53 threads the bilayer; that stretch reads WTAITLFIFLVCCQIPLFGI. Over 54–76 the chain is Lumenal; it reads MSSDSADPFYWMRVILASNRGTL. The helical transmembrane segment at 77–96 threads the bilayer; the sequence is MELGISPIVTSGLIMQLLAG. Residues 97-117 are Cytoplasmic-facing; the sequence is AKIIEVGDTPKDRALFNGAQK. The helical transmembrane segment at 118–138 threads the bilayer; it reads LFGMIITIGQAIVYVMTGMYG. Topologically, residues 139–144 are lumenal; sequence DPSEMG. Residues 145–165 traverse the membrane as a helical segment; sequence AGICLLIIIQLFVAGLIVLLL. The Cytoplasmic portion of the chain corresponds to 166-172; it reads DELLQKG. A helical membrane pass occupies residues 173-193; that stretch reads YGLGSGISLFIATNICETIVW. Over 194–240 the chain is Lumenal; the sequence is KAFSPTTVNTGRGTEFEGAIIALFHLLATRTDKVRALREAFYRQNLP. A helical transmembrane segment spans residues 241 to 261; the sequence is NLMNLIATVFVFAVVIYFQGF. At 262–288 the chain is on the cytoplasmic side; that stretch reads RVDLPIKSARYRGQYNTYPIKLFYTSN. The helical transmembrane segment at 289–309 threads the bilayer; the sequence is IPIILQSALVSNLYVISQMLS. At 310 to 354 the chain is on the lumenal side; the sequence is TRFSGNFLVNLLGTWSDTSSGGPARAYPVGGLCYYLSPPESFGSV. A helical transmembrane segment spans residues 355-375; it reads LDDPVHAVIYIVFMLGSCAFF. At 376 to 420 the chain is on the cytoplasmic side; the sequence is SKTWIEVSGSSAKDVAKQLKEQQMVMRGHRETSMVHELNRYIPTA. A helical transmembrane segment spans residues 421–441; it reads AAFGGLCIGGLSVMADFLGAI. The Lumenal segment spans residues 442 to 445; the sequence is GSGT. The helical transmembrane segment at 446–462 threads the bilayer; it reads GILLAVTIIYQYFEIFV. Topologically, residues 463–476 are cytoplasmic; sequence KEQSEVGSMGALLF.

Belongs to the SecY/SEC61-alpha family. In terms of assembly, the SEC61 channel-forming translocon complex consists of channel-forming core components SEC61A1, SEC61B and SEC61G and different auxiliary components such as SEC62 and SEC63. The SEC61 channel associates with the multi-pass translocon (MPT) complex.

Its subcellular location is the endoplasmic reticulum membrane. Functionally, component of SEC61 channel-forming translocon complex that mediates transport of signal peptide-containing precursor polypeptides across the endoplasmic reticulum (ER). Forms a ribosome receptor and a gated pore in the ER membrane, both functions required for cotranslational translocation of nascent polypeptides. May cooperate with auxiliary protein SEC62, SEC63 and HSPA5/BiP to enable post-translational transport of small presecretory proteins. The SEC61 channel is also involved in ER membrane insertion of transmembrane proteins: it mediates membrane insertion of the first few transmembrane segments of proteins, while insertion of subsequent transmembrane regions of multi-pass membrane proteins is mediated by the multi-pass translocon (MPT) complex. Plays a role in the pronephric kidney tubule development. The protein is Protein transport protein Sec61 subunit alpha-like 1 (sec61al1) of Danio rerio (Zebrafish).